The primary structure comprises 178 residues: Ribosome maturation factor RimP (178 aa).

This sequence belongs to the RimP family.

The protein resides in the cytoplasm. Functionally, required for maturation of 30S ribosomal subunits. The sequence is that of Ribosome maturation factor RimP from Streptococcus pyogenes serotype M4 (strain MGAS10750).